A 404-amino-acid chain; its full sequence is Serine/threonine transporter SstT (404 aa).

8 helical membrane passes run 17–37 (IGIG…LTGF), 39–59 (ILGK…VFAL), 75–95 (MTLI…VAVL), 138–158 (ALAT…GLAL), 179–199 (IVVW…FTTI), 212–232 (FLIL…NPLI), 287–307 (IPLG…VLTL), and 313–333 (FGIP…AVSA).

The protein belongs to the dicarboxylate/amino acid:cation symporter (DAACS) (TC 2.A.23) family.

It localises to the cell membrane. The catalysed reaction is L-serine(in) + Na(+)(in) = L-serine(out) + Na(+)(out). It carries out the reaction L-threonine(in) + Na(+)(in) = L-threonine(out) + Na(+)(out). In terms of biological role, involved in the import of serine and threonine into the cell, with the concomitant import of sodium (symport system). The protein is Serine/threonine transporter SstT of Streptococcus pyogenes serotype M5 (strain Manfredo).